Reading from the N-terminus, the 178-residue chain is 2-oxo-4-hydroxy-4-carboxy-5-ureidoimidazoline decarboxylase (178 aa).

Residue H67 is the Proton donor of the active site. Substrate is bound by residues P68, 84–88 (SQREQ), and 119–123 (FVLAA).

This sequence belongs to the OHCU decarboxylase family.

The protein resides in the peroxisome. The catalysed reaction is 5-hydroxy-2-oxo-4-ureido-2,5-dihydro-1H-imidazole-5-carboxylate + H(+) = (S)-allantoin + CO2. Its pathway is purine metabolism; urate degradation; (S)-allantoin from urate: step 3/3. Its function is as follows. Catalyzes the stereoselective decarboxylation of 2-oxo-4-hydroxy-4-carboxy-5-ureidoimidazoline (OHCU) to (S)-allantoin. In Mus musculus (Mouse), this protein is 2-oxo-4-hydroxy-4-carboxy-5-ureidoimidazoline decarboxylase (Urad).